The sequence spans 275 residues: Bis(5'-nucleosyl)-tetraphosphatase, symmetrical (275 aa).

It belongs to the Ap4A hydrolase family.

It catalyses the reaction P(1),P(4)-bis(5'-adenosyl) tetraphosphate + H2O = 2 ADP + 2 H(+). In terms of biological role, hydrolyzes diadenosine 5',5'''-P1,P4-tetraphosphate to yield ADP. The sequence is that of Bis(5'-nucleosyl)-tetraphosphatase, symmetrical from Marinomonas sp. (strain MWYL1).